Consider the following 323-residue polypeptide: Down-regulator of invasive growth 2 (323 aa).

Over residues 1–10 (MNKEEQEDPQ) the composition is skewed to acidic residues. The tract at residues 1-26 (MNKEEQEDPQQEQISTVQENDPRNLQ) is disordered. The span at 11–26 (QEQISTVQENDPRNLQ) shows a compositional bias: polar residues. Ser34 is modified (phosphoserine). The segment at 67-87 (LSQKEEDHSGKPPTITTSPAE) is disordered. Phosphoserine is present on residues Ser225, Ser266, and Ser270.

Forms a complex with DIG1, STE12 and either FUS3 or KSS1. The interaction of FUS3 with STE12 depends on the presence of both DIG1 and DIG2. STE12 is lost from FUS3/DIG1/DIG2 complex after pheromone treatment. DIG1 and DIG2 have also been reported to interact with CLN1 and CLN2. Post-translationally, phosphorylated by FUS3 and KSS1, in a pheromone-stimulated manner.

Its subcellular location is the nucleus. DIG2 and DIG1 are negative regulators of the filamentation and pheromone induced mating program. DIG1 and DIG2 inhibit the transcriptional activity of STE12 by direct protein-protein interaction. DIG2 binds to the DNA binding domain (DBD) of STE12 and thus inhibits transcription when overexpressed. The chain is Down-regulator of invasive growth 2 (DIG2) from Saccharomyces cerevisiae (strain ATCC 204508 / S288c) (Baker's yeast).